A 158-amino-acid polypeptide reads, in one-letter code: Large ribosomal subunit protein uL22 (158 aa).

The protein belongs to the universal ribosomal protein uL22 family. Part of the 50S ribosomal subunit.

This protein binds specifically to 23S rRNA. It makes multiple contacts with different domains of the 23S rRNA in the assembled 50S subunit and ribosome. In terms of biological role, the globular domain of the protein is located near the polypeptide exit tunnel on the outside of the subunit, while an extended beta-hairpin is found that lines the wall of the exit tunnel in the center of the 70S ribosome. The chain is Large ribosomal subunit protein uL22 from Haloquadratum walsbyi (strain DSM 16790 / HBSQ001).